The primary structure comprises 281 residues: Probable endonuclease 4 (281 aa).

Zn(2+) contacts are provided by His-69, His-109, Glu-145, Asp-179, His-182, His-216, Asp-229, His-231, and Glu-261.

It belongs to the AP endonuclease 2 family. The cofactor is Zn(2+).

The catalysed reaction is Endonucleolytic cleavage to 5'-phosphooligonucleotide end-products.. Its function is as follows. Endonuclease IV plays a role in DNA repair. It cleaves phosphodiester bonds at apurinic or apyrimidinic (AP) sites, generating a 3'-hydroxyl group and a 5'-terminal sugar phosphate. The protein is Probable endonuclease 4 of Chlorobaculum tepidum (strain ATCC 49652 / DSM 12025 / NBRC 103806 / TLS) (Chlorobium tepidum).